A 705-amino-acid polypeptide reads, in one-letter code: MPSKQIRKQSVILTRGARKREEDSGTDVGEGADDWAQSKAAVRPPDQLELTDAELKEEFTRILTANNPHAPQNIVRYSFKERTYKLIGFVNQMAIHFSQVGNLIPKDSDEGRRQHYRDELVAGSQESVKVVTSDTEILEEEEEPKEGEGEGEGEAEGEAEAGSQTDVPAAAETTEKVIEEELMAPVQPKERKLTNQFNFSERASQTFNNPLRDRECQMEPPPRTNFSATANQWEIYDAYVDELEKLEKTKEKEKTKTPVAKKTEKMAMRKLTSMESQSDDITKVTQAAKIVERMVNQNTYDDVAQDFKYYEDAADEYRDQEGTLLPLWKFQNDKAKRLAVTALCWNPKYKDLFAVGHGSYDFMKQSRGMLLLYSMKNPSFPEYMFSSESGIMCLDMHMDHPYLVVVGYYDGNVAIYNLKKPHSQPCFRSTSKSGKHTDPVWQVKWQKDDMDHNLNFFSVSSDGRIVSWTLVKSELVHIDVIKLKDEGSTTEIPEGLQLHTVGCGTAFDFHKEIDYLFLVGTEEGKIYKCSKSYSSQFLDTYDAHNMAVDAVLWNPYHARVFISCSSDWTVKIWDHAIKTPMFIYDLNAAVGDVAWAPYSSTVFAAVTTDGKAHVFDLAVNKYEAICNQPVVAKKKNKITHVQFNPIHPIIIVGDDRGHITCLKLSPNLRKMPKEKKGQEVQKGPAVEIAKLDKLLNLVREVKTKT.

2 disordered regions span residues 1–44 (MPSK…AVRP) and 122–169 (AGSQ…DVPA). Phosphoserine occurs at positions 124 and 127. The segment covering 124–135 (SQESVKVVTSDT) has biased composition (polar residues). The segment covering 136 to 159 (EILEEEEEPKEGEGEGEGEAEGEA) has biased composition (acidic residues). 5 WD repeats span residues 386–426 (SSES…SQPC), 435–478 (KHTD…LVHI), 543–583 (AHNM…PMFI), 585–625 (DLNA…YEAI), and 633–672 (KKKN…RKMP).

It belongs to the dynein intermediate chain family. As to quaternary structure, consists of at least two heavy chains and a number of intermediate and light chains. Interacts with BICD2. Interacts with CFAP45 and CFAP52. Interacts with CFAP53.

It is found in the cytoplasm. The protein resides in the cytoskeleton. The protein localises to the cilium axoneme. Functionally, part of the dynein complex of respiratory cilia. The protein is Dynein axonemal intermediate chain 1 (Dnai1) of Rattus norvegicus (Rat).